The sequence spans 548 residues: MKLSKKYTFRSRKVLLIILDGVGYSPKGPESGNAIAGAKLPFLNRVWNQFPTLHIQAHGKAVGMPSDDDMGNSEVGHNVLGSGRIFDQGAKLVSNSIASGDIFNGQAWKEVIGNSKKNNSTLHLLGLFSDGNVHSHIDHTKALISQAILEKVPKIRLHILLDGRDVPEKSALDYLNPFETWLDSLRKSGTDIRIASGGGRMTITMDRYEADWSMVERGWKVHVKGEGRYFSSAKEAIETFRSENPKIIDQYLPSFVISDNGKPVGKIQDGDSVVFTNFRGDRAIEISLAFTEKNFDKFDRGPLPNVLYAGIMQYDGDLKLPERFLVAPPAIDRTLGEYMASSNIPQYALSETQKYGHVTYFWNGNKSGYFDQNSEEYREILSDVIPFDQSPEMKALLITEALEKALNENKQDFYRVNYANGDMVGHTGNYLATVQAMEFLDGCVERLWKTCEKQNIVLLVTADHGNADEMFQLDKKGNVEKDSHGNPIPKTSHTLNPVPISILDPENKIRFNSKLSNPGLANVAATILDVMGYETPEGYHPSLIQNES.

2 residues coordinate Mn(2+): aspartate 20 and serine 73. Serine 73 (phosphoserine intermediate) is an active-site residue. Residues histidine 134, 164-165 (RD), arginine 200, arginine 207, 279-282 (RGDR), and lysine 354 contribute to the substrate site. The Mn(2+) site is built by aspartate 422, histidine 426, aspartate 463, histidine 464, and histidine 493.

Belongs to the BPG-independent phosphoglycerate mutase family. In terms of assembly, monomer. Requires Mn(2+) as cofactor.

It catalyses the reaction (2R)-2-phosphoglycerate = (2R)-3-phosphoglycerate. It functions in the pathway carbohydrate degradation; glycolysis; pyruvate from D-glyceraldehyde 3-phosphate: step 3/5. Catalyzes the interconversion of 2-phosphoglycerate and 3-phosphoglycerate. This is Probable 2,3-bisphosphoglycerate-independent phosphoglycerate mutase (gpmI) from Leptospira interrogans serogroup Icterohaemorrhagiae serovar Lai (strain 56601).